Reading from the N-terminus, the 491-residue chain is MATRVQPSVKVLGASFSQEANPFTAAVELTPMPMLITNPRLPDNPIIFANEAFQNLTGYEADEIIGKNCRFLQGPGTDPKHVEIIHSALEAEQSVEIDILNYKKSGEPFWNRLHISPVKTENGELHHFVSSQLDVTLELGKLVELEKERETLSIEKQRSSDQLQYIVEVANVGFWTRDYTTGEISCSAEYRRIFGLTPDEPVNYDKIIDMVVLEDRITLIQRSQESFATGKSFRVEYRITNRLGQVRWVETRAKALLGKSPALLGIVIDVTERKKAEADKALVTREISHRFKNSMAMVQSIANQTLRNATDPQTANELFSERLRALSQAHDMLLREDWTGTTISQICETALAPFNSTFGHRIRTSGPELVVSDRVTVSLSLGLYELATNAVKYGALSNENGTVQFSWDVLERQGERKFHMRWVEDGGPAVERPTRRGFGQRLLYSVLTGELRAKCDINFAPDGLVIDVLAPMTADVFPQLDSLSDTQAEPV.

Positions 19-92 (EANPFTAAVE…EIIHSALEAE (74 aa)) constitute a PAS 1 domain. Cys69 is subject to S-4a-FMN cysteine. Positions 93–147 (QSVEIDILNYKKSGEPFWNRLHISPVKTENGELHHFVSSQLDVTLELGKLVELEK) constitute a PAC domain. Positions 159 to 230 (SSDQLQYIVE…QRSQESFATG (72 aa)) constitute a PAS 2 domain. The HWE histidine kinase domain stretch occupies residues 286-368 (EISHRFKNSM…GHRIRTSGPE (83 aa)). His289 bears the Phosphohistidine; by autocatalysis mark.

Post-translationally, FMN binds covalently to cysteine after exposure to blue light and this bond is spontaneously broken in the dark.

It catalyses the reaction ATP + protein L-histidine = ADP + protein N-phospho-L-histidine.. Functionally, photosensitive kinase that is involved in increased bacterial virulence upon exposure to light. This Brucella anthropi (strain ATCC 49188 / DSM 6882 / CCUG 24695 / JCM 21032 / LMG 3331 / NBRC 15819 / NCTC 12168 / Alc 37) (Ochrobactrum anthropi) protein is Blue-light-activated histidine kinase.